A 752-amino-acid polypeptide reads, in one-letter code: Protein ORF24 (752 aa).

It belongs to the herpesviridae UL87 family. Interacts with ORF34.

Plays a role in the expression of late viral mRNAs together with ORF34. In Homo sapiens (Human), this protein is Protein ORF24 (ORF24).